A 616-amino-acid chain; its full sequence is Centrosomal protein of 70 kDa (616 aa).

Coiled coils occupy residues 96-210 (EETT…EEER) and 273-335 (NYKG…NIKL). The TPR repeat unit spans residues 502–535 (NGVFPRMNEVYTRLGEMNNAVRNLQELLELDSSS).

In terms of assembly, directly interacts with tubulin-gamma; this interaction determines centrosomal localization.

The protein localises to the cytoplasm. It localises to the cytoskeleton. Its subcellular location is the microtubule organizing center. The protein resides in the centrosome. Its function is as follows. Plays a role in the organization of both preexisting and nascent microtubules in interphase cells. During mitosis, required for the organization and orientation of the mitotic spindle. The chain is Centrosomal protein of 70 kDa (Cep70) from Mus musculus (Mouse).